We begin with the raw amino-acid sequence, 476 residues long: MTEAVERLTKKSEDSSRWYLELVRMAKLADYGPVRGTFAIRPYGFAIWERIQADLDARFKATGHVNAYFPLLIPESYLTKEAEHVEGFAPECAWVTVGGDDELEERLAIRPTSESIICDFYRKWIHSYRDLPVLINQWCNVLRWEMVTRPFLRTAEFLWQEGHTVHATAEEAREEALRMLNVYRDCFYEVLAIPVLTGMKSPSERFAGAVETFTCEGLMGDGRALQAATSHDLGQNFARAFDITFLDENQERVHPYQTSWGFSTRTIGALILVHGDDRGLRLPPKLAPTQAVVVPIWRGKNKGEVRREAEALHRELAEAGLRAEADLDEEHSPGWKFNEHELRGVPVRVELGPKDIEKGQAVLVRRDTGEKEFVGRGAAARRLVELMDEIQQNMLRQAEAFRDENTRRAETYEEFKEIIEEKRGFVVAPWDGTEETEQRIKEETKATIRLLPFEREEGKDLVSGRPGKTAVFARAY.

This sequence belongs to the class-II aminoacyl-tRNA synthetase family. ProS type 3 subfamily. As to quaternary structure, homodimer.

Its subcellular location is the cytoplasm. The enzyme catalyses tRNA(Pro) + L-proline + ATP = L-prolyl-tRNA(Pro) + AMP + diphosphate. Functionally, catalyzes the attachment of proline to tRNA(Pro) in a two-step reaction: proline is first activated by ATP to form Pro-AMP and then transferred to the acceptor end of tRNA(Pro). This is Proline--tRNA ligase from Rubrobacter xylanophilus (strain DSM 9941 / JCM 11954 / NBRC 16129 / PRD-1).